The primary structure comprises 154 residues: Regulatory protein RecX (154 aa).

It belongs to the RecX family.

The protein localises to the cytoplasm. In terms of biological role, modulates RecA activity. The protein is Regulatory protein RecX of Trichlorobacter lovleyi (strain ATCC BAA-1151 / DSM 17278 / SZ) (Geobacter lovleyi).